The sequence spans 275 residues: 4-diphosphocytidyl-2-C-methyl-D-erythritol kinase (275 aa).

K14 is a catalytic residue. 98 to 108 (PMGAGLGGGSS) is an ATP binding site. D140 is an active-site residue.

The protein belongs to the GHMP kinase family. IspE subfamily.

The catalysed reaction is 4-CDP-2-C-methyl-D-erythritol + ATP = 4-CDP-2-C-methyl-D-erythritol 2-phosphate + ADP + H(+). It participates in isoprenoid biosynthesis; isopentenyl diphosphate biosynthesis via DXP pathway; isopentenyl diphosphate from 1-deoxy-D-xylulose 5-phosphate: step 3/6. Functionally, catalyzes the phosphorylation of the position 2 hydroxy group of 4-diphosphocytidyl-2C-methyl-D-erythritol. This chain is 4-diphosphocytidyl-2-C-methyl-D-erythritol kinase, found in Francisella tularensis subsp. holarctica (strain FTNF002-00 / FTA).